A 210-amino-acid chain; its full sequence is Probable GTP-binding protein EngB (210 aa).

Residues 25–199 form the EngB-type G domain; sequence TGIEVAFAGR…RQKLDTWFSE (175 aa). GTP-binding positions include 33–40, 60–64, 78–81, 145–148, and 178–180; these read GRSNAGKS, GRTQL, DLPG, TKAD, and FSS. Residues serine 40 and threonine 62 each contribute to the Mg(2+) site.

The protein belongs to the TRAFAC class TrmE-Era-EngA-EngB-Septin-like GTPase superfamily. EngB GTPase family. Requires Mg(2+) as cofactor.

In terms of biological role, necessary for normal cell division and for the maintenance of normal septation. This Shigella boydii serotype 4 (strain Sb227) protein is Probable GTP-binding protein EngB.